The primary structure comprises 142 residues: Baculoviral IAP repeat-containing protein 5 (142 aa).

One copy of the BIR repeat lies at Arg-18–Ser-88. Phosphoserine; by AURKC is present on Ser-20. At Lys-23 the chain carries N6-acetyllysine. At Thr-34 the chain carries Phosphothreonine; by CDK1 and CDK15. Thr-48 is modified (phosphothreonine). Zn(2+) is bound by residues Cys-57, Cys-60, His-77, and Cys-84. Residues Lys-90, Lys-110, Lys-112, and Lys-115 each carry the N6-acetyllysine modification. A Phosphothreonine; by AURKB modification is found at Thr-117. An N6-acetyllysine modification is found at Lys-129.

Belongs to the IAP family. Monomer or homodimer. Exists as a homodimer in the apo state and as a monomer in the CPC-bound state. The monomer protects cells against apoptosis more efficiently than the dimer. Only the dimeric form is capable of enhancing tubulin stability in cells. When phosphorylated, interacts with LAMTOR5/HBXIP; the resulting complex binds pro-CASP9, as well as active CASP9, but much less efficiently. Component of the chromosomal passenger complex (CPC) composed of at least BIRC5/survivin, CDCA8/borealin, INCENP, AURKB or AURKC; in the complex forms a triple-helix bundle-based subcomplex with INCENP and CDCA8. Interacts with JTB. Interacts (via BIR domain) with histone H3 phosphorylated at 'Thr-3' (H3pT3). Interacts with EVI5. Interacts with GTP-bound RAN in both the S and M phases of the cell cycle. Interacts with USP9X. Interacts with tubulin. Interacts with BIRC2/c-IAP1. The acetylated form at Lys-129 interacts with STAT3. The monomeric form deacetylated at Lys-129 interacts with XPO1/CRM1. The monomeric form interacts with XIAP/BIRC4. Both the dimeric and monomeric form can interact with DIABLO/SMAC. Interacts with BIRC6/bruce. Interacts with FBXL7; this interaction facilitates the polyubiquitination and subsequent proteasomal degradation of BIRC5 by the SCF(FBXL7) E3 ubiquitin-protein ligase complex. In terms of processing, ubiquitinated by the Cul9-RING ubiquitin-protein ligase complex, leading to its degradation. Ubiquitination is required for centrosomal targeting. Deubiquitinated by USP35 or USP38; leading to stabilization. Post-translationally, acetylation at Lys-129 results in its homodimerization, while deacetylation promotes the formation of monomers which heterodimerize with XPO1/CRM1 which facilitates its nuclear export. The acetylated form represses STAT3 transactivation. The dynamic equilibrium between its acetylation and deacetylation at Lys-129 determines its interaction with XPO1/CRM1, its subsequent subcellular localization, and its ability to inhibit STAT3 transactivation. In vitro phosphorylation at Thr-117 by AURKB prevents interaction with INCENP and localization to mitotic chromosomes. Phosphorylation at Thr-48 by CK2 is critical for its mitotic and anti-apoptotic activities. Phosphorylation at Thr-34 by CDK15 is critical for its anti-apoptotic activity. Phosphorylation at Ser-20 by AURKC is critical for regulation of proper chromosome alignment and segregation, and possibly cytokinesis.

The protein localises to the cytoplasm. It is found in the nucleus. The protein resides in the chromosome. Its subcellular location is the centromere. It localises to the cytoskeleton. The protein localises to the spindle. It is found in the kinetochore. The protein resides in the midbody. Its function is as follows. Multitasking protein that has dual roles in promoting cell proliferation and preventing apoptosis. Component of a chromosome passage protein complex (CPC) which is essential for chromosome alignment and segregation during mitosis and cytokinesis. Acts as an important regulator of the localization of this complex; directs CPC movement to different locations from the inner centromere during prometaphase to midbody during cytokinesis and participates in the organization of the center spindle by associating with polymerized microtubules. Involved in the recruitment of CPC to centromeres during early mitosis via association with histone H3 phosphorylated at 'Thr-3' (H3pT3) during mitosis. The complex with RAN plays a role in mitotic spindle formation by serving as a physical scaffold to help deliver the RAN effector molecule TPX2 to microtubules. May counteract a default induction of apoptosis in G2/M phase. The acetylated form represses STAT3 transactivation of target gene promoters. May play a role in neoplasia. Inhibitor of CASP3 and CASP7. Essential for the maintenance of mitochondrial integrity and function. In Bos taurus (Bovine), this protein is Baculoviral IAP repeat-containing protein 5 (BIRC5).